The following is a 974-amino-acid chain: Alpha-1,4 glucan phosphorylase L-2 isozyme, chloroplastic/amyloplastic (974 aa).

The N-terminal 81 residues, 1 to 81 (MATFAVSGLN…LDVFQPDSTS (81 aa)), are a transit peptide targeting the chloroplast. The interval 509–551 (ADVEKAADEEQEEEGKDDSKDEETEAVKAETTNEEEETEVKKV) is disordered. Residues 517–532 (EEQEEEGKDDSKDEET) are compositionally biased toward acidic residues. Lysine 820 bears the N6-(pyridoxal phosphate)lysine mark.

It belongs to the glycogen phosphorylase family. Pyridoxal 5'-phosphate serves as cofactor. Leaves.

The protein resides in the plastid. It localises to the chloroplast. The protein localises to the amyloplast. It catalyses the reaction [(1-&gt;4)-alpha-D-glucosyl](n) + phosphate = [(1-&gt;4)-alpha-D-glucosyl](n-1) + alpha-D-glucose 1-phosphate. Functionally, phosphorylase is an important allosteric enzyme in carbohydrate metabolism. Enzymes from different sources differ in their regulatory mechanisms and in their natural substrates. However, all known phosphorylases share catalytic and structural properties. This chain is Alpha-1,4 glucan phosphorylase L-2 isozyme, chloroplastic/amyloplastic (STP-1), found in Solanum tuberosum (Potato).